An 862-amino-acid chain; its full sequence is Protein PRQFV-amide (862 aa).

A signal peptide spans 1–20; the sequence is MSSQLLICSVFVLFTFGPNS. A propeptide spanning residues 21-79 is cleaved from the precursor; the sequence is FPSCLAQEQAGNSDATQLSADAKAPESAKDKSGDVQNDGTKSVRSKRDLEIDFGSGDVQ. Positions 32 to 68 are disordered; that stretch reads NSDATQLSADAKAPESAKDKSGDVQNDGTKSVRSKRD. Basic and acidic residues predominate over residues 43-53; the sequence is KAPESAKDKSG. The residue at position 86 (V86) is a Valine amide. The propeptide occupies 90–149; the sequence is AAPPVFQTPLVQDKISGFIPSETESPVIGEFAFPGSVFMDDEEALGAEEEPMDDEDLEFY. The residue at position 156 (V156) is a Valine amide. A propeptide spanning residues 160-175 is cleaved from the precursor; it reads GIDDYLLQEKLKDFIE. Valine amide is present on residues V182, V190, V198, V206, V214, V222, V230, V238, and V246. A propeptide spanning residues 250 to 259 is cleaved from the precursor; the sequence is EADPSFLFED. V266 is subject to Valine amide. A propeptide spanning residues 270–300 is cleaved from the precursor; that stretch reads SLDFLGGANWYNPYDVTMEPQSEGSDLQGFS. Position 307 is a valine amide (V307). Positions 311–319 are excised as a propeptide; it reads DAFDMFEFS. V326 bears the Valine amide mark. The propeptide occupies 330–338; it reads DQDEMFDFS. The residue at position 345 (V345) is a Valine amide. A propeptide spanning residues 349–357 is cleaved from the precursor; that stretch reads DLQEFFDLS. Valine amide is present on V364. A propeptide spanning residues 368–376 is cleaved from the precursor; that stretch reads EFDDEIDFS. V383 is subject to Valine amide. The propeptide occupies 387–395; it reads ENDDDFDLS. The residue at position 402 (V402) is a Valine amide. Residues 406–414 constitute a propeptide that is removed on maturation; sequence ENDDEFDLS. V421 is subject to Valine amide. Positions 424 to 434 are enriched in basic and acidic residues; sequence RENDDELEFSK. Positions 424–528 are disordered; it reads RENDDELEFS…NNDDLDFSKR (105 aa). Residues 425–433 constitute a propeptide that is removed on maturation; it reads ENDDELEFS. V440 is subject to Valine amide. A compositionally biased stretch (basic and acidic residues) spans 441 to 452; the sequence is GKREDDEIDFSK. Positions 444 to 451 are excised as a propeptide; it reads EDDEIDFS. V458 bears the Valine amide mark. Positions 459–471 are enriched in basic and acidic residues; sequence GKRENDGEIDFSK. Residues 462-470 constitute a propeptide that is removed on maturation; sequence ENDGEIDFS. V477 bears the Valine amide mark. Basic and acidic residues predominate over residues 478 to 490; sequence GKRENDDEIDFSK. Residues 481 to 489 constitute a propeptide that is removed on maturation; the sequence is ENDDEIDFS. At V496 the chain carries Valine amide. Over residues 497–508 the composition is skewed to basic and acidic residues; it reads GKREDGEIDFSK. The propeptide occupies 500–507; sequence EDGEIDFS. Position 514 is a valine amide (V514). Over residues 515-527 the composition is skewed to basic and acidic residues; that stretch reads GKRENNDDLDFSK. The propeptide occupies 518 to 526; that stretch reads ENNDDLDFS. Residue V533 is modified to Valine amide. Residues 537 to 545 constitute a propeptide that is removed on maturation; that stretch reads EVDDEIDFS. The tract at residues 549 to 634 is disordered; that stretch reads RQFVGKREND…RQFVGKREND (86 aa). Position 552 is a valine amide (V552). Residues 553–565 show a composition bias toward basic and acidic residues; it reads GKRENDDDLDFSK. A propeptide spanning residues 556–564 is cleaved from the precursor; that stretch reads ENDDDLDFS. Residue V571 is modified to Valine amide. The segment covering 572–584 has biased composition (basic and acidic residues); that stretch reads GKRENDDDLEFSK. Positions 575–583 are excised as a propeptide; sequence ENDDDLEFS. A Valine amide modification is found at V590. Residues 594–602 constitute a propeptide that is removed on maturation; the sequence is ENDPLLDFS. At V609 the chain carries Valine amide. The segment covering 610 to 622 has biased composition (basic and acidic residues); the sequence is GKRENDDDLDFSK. Residues 613–621 constitute a propeptide that is removed on maturation; that stretch reads ENDDDLDFS. V628 is subject to Valine amide. A propeptide spanning residues 632–640 is cleaved from the precursor; sequence ENDPLIDFS. The residue at position 647 (V647) is a Valine amide. Residues 651–659 constitute a propeptide that is removed on maturation; sequence ESDGDFELS. At V666 the chain carries Valine amide. Positions 670-677 are excised as a propeptide; the sequence is DVDGPGLS. A Valine amide modification is found at V684. A propeptide spanning residues 688 to 695 is cleaved from the precursor; the sequence is EDYDIDFA. V702 bears the Valine amide mark. Positions 706 to 714 are excised as a propeptide; it reads GNEDEFEMS. V721 carries the post-translational modification Valine amide. The propeptide occupies 724 to 757; the sequence is RNFEELDQDFLRHMHDILDKRIPQFVSLPSLTAA. At V764 the chain carries Valine amide. A propeptide spanning residues 768–812 is cleaved from the precursor; that stretch reads SDAAFLETLRHLRDYVGGQDEQNVSEFSYQHPYPSDLNDVGLIQQ. V819 bears the Valine amide mark. The propeptide occupies 823–862; sequence GGDVDDINTTYRLGDFVSQPMSFVEEPSWLCRQLNAFGIS.

Expressed abundantly in the abdominal ganglion, much less in the pedal and cerebral ganglia, and rarely in the buccal and pleural ganglia.

The protein resides in the secreted. Its function is as follows. PRQFV-amide may act as a modulator within the feeding system as well as in other systems of Aplysia. The polypeptide is Protein PRQFV-amide (Aplysia californica (California sea hare)).